Here is a 400-residue protein sequence, read N- to C-terminus: MGKAKFERNKPHVNVGTIGHVDHGKTTTTAALTKISADKGYGTKYIAYDEVAKASESQGRRDSTKILTIATSHVEYETENRHYAHVDCPGHADYVKNMITGAAQMDGAILVVSAVDGPMPQTREHILLARQVNVPSVVVFLNKCDLVEDEELLDLVELEVRELLSKYNYPGDDAPVIRGSAINAINGDPKWVAEFMKLYEALDSYIPEPVREVDKPFLLPVEDVFSITGRGTVATGRIERGIVKVGEEVQLVGYNAEKKTIVTGVEMFRKLLDEGQAGDNVGLLLRGVDKKDIERGMVLAKPNSIKPHTKFHSEVYVLTKEEGGRHTPFFKGYRPQFYFRTTDVTGTIELPEGMEMVMPGDNVQMTIELIIPIAMEEQLRFAIREGGRTVGAGVVTKILA.

Residues 10–210 enclose the tr-type G domain; the sequence is KPHVNVGTIG…ALDSYIPEPV (201 aa). A G1 region spans residues 19–26; sequence GHVDHGKT. 19–26 serves as a coordination point for GTP; the sequence is GHVDHGKT. Residue Thr-26 coordinates Mg(2+). The tract at residues 66–70 is G2; sequence ILTIA. Residues 87–90 form a G3 region; the sequence is DCPG. Residues 87–91 and 142–145 each bind GTP; these read DCPGH and NKCD. The segment at 142–145 is G4; the sequence is NKCD. The interval 180 to 182 is G5; sequence SAI.

It belongs to the TRAFAC class translation factor GTPase superfamily. Classic translation factor GTPase family. EF-Tu/EF-1A subfamily. In terms of assembly, monomer.

It localises to the cytoplasm. It catalyses the reaction GTP + H2O = GDP + phosphate + H(+). In terms of biological role, GTP hydrolase that promotes the GTP-dependent binding of aminoacyl-tRNA to the A-site of ribosomes during protein biosynthesis. The protein is Elongation factor Tu of Gemmatimonas aurantiaca (strain DSM 14586 / JCM 11422 / NBRC 100505 / T-27).